The primary structure comprises 444 residues: Bystin (444 aa).

2 disordered regions span residues 1–37 and 53–85; these read MAKK…HQKQ and ALAQ…TAGE. The segment covering 24–34 has biased composition (basic residues); it reads SRKRSKVPKTH. The span at 73-84 shows a compositional bias: low complexity; it reads AAFAVAGAATAG.

It belongs to the bystin family. In terms of assembly, component of the 40S pre-ribosome. In terms of tissue distribution, highly expressed in flowers and at lower levels in roots, hypocotyls, stems, leaves, siliques and seeds.

The protein localises to the nucleus. Its subcellular location is the nucleolus. It is found in the nucleoplasm. Functionally, essential protein required during embryogenesis and pollen development. Required for processing of 20S pre-rRNA precursor and biogenesis of 40S ribosomal subunits. In Arabidopsis thaliana (Mouse-ear cress), this protein is Bystin.